A 691-amino-acid polypeptide reads, in one-letter code: Guanylate cyclase soluble subunit alpha-1 (691 aa).

Ser267 is subject to Phosphoserine. Residues 480–607 (VTMLFSDIVG…GNNVTLANKF (128 aa)) enclose the Guanylate cyclase domain.

This sequence belongs to the adenylyl cyclase class-4/guanylyl cyclase family. The active enzyme is formed by a heterodimer of an alpha and a beta subunit. Heterodimer with GUCY1B1. Mg(2+) serves as cofactor. Mn(2+) is required as a cofactor.

It is found in the cytoplasm. The enzyme catalyses GTP = 3',5'-cyclic GMP + diphosphate. Its activity is regulated as follows. Activated by nitric oxide in the presence of magnesium or manganese ions. The polypeptide is Guanylate cyclase soluble subunit alpha-1 (Gucy1a1) (Mus musculus (Mouse)).